We begin with the raw amino-acid sequence, 137 residues long: Large ribosomal subunit protein uL16 (137 aa).

Belongs to the universal ribosomal protein uL16 family. As to quaternary structure, part of the 50S ribosomal subunit.

Its function is as follows. Binds 23S rRNA and is also seen to make contacts with the A and possibly P site tRNAs. This Streptococcus agalactiae serotype Ia (strain ATCC 27591 / A909 / CDC SS700) protein is Large ribosomal subunit protein uL16.